The primary structure comprises 491 residues: Probable cytosol aminopeptidase (491 aa).

Mn(2+) contacts are provided by Lys-260 and Asp-265. Lys-272 is a catalytic residue. The Mn(2+) site is built by Asp-284, Asp-343, and Glu-345. Arg-347 is an active-site residue.

The protein belongs to the peptidase M17 family. Mn(2+) is required as a cofactor.

It localises to the cytoplasm. It carries out the reaction Release of an N-terminal amino acid, Xaa-|-Yaa-, in which Xaa is preferably Leu, but may be other amino acids including Pro although not Arg or Lys, and Yaa may be Pro. Amino acid amides and methyl esters are also readily hydrolyzed, but rates on arylamides are exceedingly low.. The enzyme catalyses Release of an N-terminal amino acid, preferentially leucine, but not glutamic or aspartic acids.. Its function is as follows. Presumably involved in the processing and regular turnover of intracellular proteins. Catalyzes the removal of unsubstituted N-terminal amino acids from various peptides. This Trichormus variabilis (strain ATCC 29413 / PCC 7937) (Anabaena variabilis) protein is Probable cytosol aminopeptidase.